We begin with the raw amino-acid sequence, 340 residues long: Ketol-acid reductoisomerase (NADP(+)) (340 aa).

Residues 2–182 enclose the KARI N-terminal Rossmann domain; sequence AELYYDNQAD…GCTRAGVLRT (181 aa). NADP(+)-binding positions include 25-28, serine 51, serine 53, and 83-86; these read FGSQ and DIGQ. The active site involves histidine 108. Residue glycine 134 coordinates NADP(+). A KARI C-terminal knotted domain is found at 183–328; sequence TFAEETETDL…RELRRMMPFV (146 aa). Mg(2+) contacts are provided by aspartate 191, glutamate 195, glutamate 227, and glutamate 231. Serine 252 contributes to the substrate binding site.

This sequence belongs to the ketol-acid reductoisomerase family. It depends on Mg(2+) as a cofactor.

It catalyses the reaction (2R)-2,3-dihydroxy-3-methylbutanoate + NADP(+) = (2S)-2-acetolactate + NADPH + H(+). The enzyme catalyses (2R,3R)-2,3-dihydroxy-3-methylpentanoate + NADP(+) = (S)-2-ethyl-2-hydroxy-3-oxobutanoate + NADPH + H(+). The protein operates within amino-acid biosynthesis; L-isoleucine biosynthesis; L-isoleucine from 2-oxobutanoate: step 2/4. Its pathway is amino-acid biosynthesis; L-valine biosynthesis; L-valine from pyruvate: step 2/4. In terms of biological role, involved in the biosynthesis of branched-chain amino acids (BCAA). Catalyzes an alkyl-migration followed by a ketol-acid reduction of (S)-2-acetolactate (S2AL) to yield (R)-2,3-dihydroxy-isovalerate. In the isomerase reaction, S2AL is rearranged via a Mg-dependent methyl migration to produce 3-hydroxy-3-methyl-2-ketobutyrate (HMKB). In the reductase reaction, this 2-ketoacid undergoes a metal-dependent reduction by NADPH to yield (R)-2,3-dihydroxy-isovalerate. The protein is Ketol-acid reductoisomerase (NADP(+)) of Chloroflexus aggregans (strain MD-66 / DSM 9485).